The primary structure comprises 150 residues: D-aminoacyl-tRNA deacylase (150 aa).

Residues 138–139 carry the Gly-cisPro motif, important for rejection of L-amino acids motif; it reads GP.

The protein belongs to the DTD family. Homodimer.

Its subcellular location is the cytoplasm. It catalyses the reaction glycyl-tRNA(Ala) + H2O = tRNA(Ala) + glycine + H(+). The catalysed reaction is a D-aminoacyl-tRNA + H2O = a tRNA + a D-alpha-amino acid + H(+). An aminoacyl-tRNA editing enzyme that deacylates mischarged D-aminoacyl-tRNAs. Also deacylates mischarged glycyl-tRNA(Ala), protecting cells against glycine mischarging by AlaRS. Acts via tRNA-based rather than protein-based catalysis; rejects L-amino acids rather than detecting D-amino acids in the active site. By recycling D-aminoacyl-tRNA to D-amino acids and free tRNA molecules, this enzyme counteracts the toxicity associated with the formation of D-aminoacyl-tRNA entities in vivo and helps enforce protein L-homochirality. This is D-aminoacyl-tRNA deacylase from Phocaeicola vulgatus (strain ATCC 8482 / DSM 1447 / JCM 5826 / CCUG 4940 / NBRC 14291 / NCTC 11154) (Bacteroides vulgatus).